A 255-amino-acid polypeptide reads, in one-letter code: UPF0246 protein Cphy_1568 (255 aa).

It belongs to the UPF0246 family.

The polypeptide is UPF0246 protein Cphy_1568 (Lachnoclostridium phytofermentans (strain ATCC 700394 / DSM 18823 / ISDg) (Clostridium phytofermentans)).